A 398-amino-acid polypeptide reads, in one-letter code: S-adenosylmethionine synthase (398 aa).

His16 serves as a coordination point for ATP. Asp18 serves as a coordination point for Mg(2+). Glu51 serves as a coordination point for K(+). Glu64 and Gln108 together coordinate L-methionine. The segment at 108-118 is flexible loop; sequence QSADIAQGVDA. Residues 176–178, 242–243, Asp251, 257–258, Ala274, and Lys278 contribute to the ATP site; these read DSK, KF, and RK. Residue Asp251 coordinates L-methionine. Lys282 contacts L-methionine.

This sequence belongs to the AdoMet synthase family. In terms of assembly, homotetramer; dimer of dimers. Mg(2+) is required as a cofactor. It depends on K(+) as a cofactor.

It localises to the cytoplasm. The catalysed reaction is L-methionine + ATP + H2O = S-adenosyl-L-methionine + phosphate + diphosphate. It participates in amino-acid biosynthesis; S-adenosyl-L-methionine biosynthesis; S-adenosyl-L-methionine from L-methionine: step 1/1. Functionally, catalyzes the formation of S-adenosylmethionine (AdoMet) from methionine and ATP. The overall synthetic reaction is composed of two sequential steps, AdoMet formation and the subsequent tripolyphosphate hydrolysis which occurs prior to release of AdoMet from the enzyme. This chain is S-adenosylmethionine synthase, found in Rhodopseudomonas palustris (strain HaA2).